A 182-amino-acid polypeptide reads, in one-letter code: Probable RNA 2'-phosphotransferase (182 aa).

Belongs to the KptA/TPT1 family.

Its function is as follows. Removes the 2'-phosphate from RNA via an intermediate in which the phosphate is ADP-ribosylated by NAD followed by a presumed transesterification to release the RNA and generate ADP-ribose 1''-2''-cyclic phosphate (APPR&gt;P). May function as an ADP-ribosylase. The sequence is that of Probable RNA 2'-phosphotransferase from Pseudomonas fluorescens (strain ATCC BAA-477 / NRRL B-23932 / Pf-5).